We begin with the raw amino-acid sequence, 96 residues long: MALTLADVDKIARLSRLHLTAEEKEKSLQELNDIFTMVEQMQTINTDGIEPMAHPHEAALRLREDEVTETDRAAEYQAGAPEVRNRLYIVPQVIEE.

The protein belongs to the GatC family. In terms of assembly, heterotrimer of A, B and C subunits.

It carries out the reaction L-glutamyl-tRNA(Gln) + L-glutamine + ATP + H2O = L-glutaminyl-tRNA(Gln) + L-glutamate + ADP + phosphate + H(+). The enzyme catalyses L-aspartyl-tRNA(Asn) + L-glutamine + ATP + H2O = L-asparaginyl-tRNA(Asn) + L-glutamate + ADP + phosphate + 2 H(+). Allows the formation of correctly charged Asn-tRNA(Asn) or Gln-tRNA(Gln) through the transamidation of misacylated Asp-tRNA(Asn) or Glu-tRNA(Gln) in organisms which lack either or both of asparaginyl-tRNA or glutaminyl-tRNA synthetases. The reaction takes place in the presence of glutamine and ATP through an activated phospho-Asp-tRNA(Asn) or phospho-Glu-tRNA(Gln). The polypeptide is Glutamyl-tRNA(Gln) amidotransferase subunit C (Neisseria meningitidis serogroup B (strain ATCC BAA-335 / MC58)).